A 221-amino-acid polypeptide reads, in one-letter code: MCPLRSLLLISTLVLLHHLPHLSLGRSLPITTAGPGRSCLDYSQNLLRAVSNTLQKARQTLEFYSCTSEEIDHEDITKDKTSTVEACLPLELATNESCLASRETSLITNGHCLASGKTSFMTTLCLRSIYKDLKMYHMEFQAINAKLLMDPKRQVSLDQNMLAAIAELMQALNFDSETVPQKPSLEELDFYKTKVKLCILLHAFRIRAVTIDRMMSYLSSS.

Residues 1–25 (MCPLRSLLLISTLVLLHHLPHLSLG) form the signal peptide. Cystine bridges form between Cys-39–Cys-112, Cys-66–Cys-198, and Cys-87–Cys-125. Asn-95 carries an N-linked (GlcNAc...) asparagine glycan.

It belongs to the IL-6 superfamily. As to quaternary structure, heterodimer with IL12B; disulfide-linked. This heterodimer is known as interleukin IL-12. Heterodimer with EBI3/IL27B; not disulfide-linked. This heterodimer is known as interleukin IL-35. Interacts with NBR1; this interaction promotes IL-12 secretion.

It is found in the secreted. In terms of biological role, heterodimerizes with IL12B to form the IL-12 cytokine or with EBI3/IL27B to form the IL-35 cytokine. IL-12 is primarily produced by professional antigen-presenting cells (APCs) such as B-cells and dendritic cells (DCs) as well as macrophages and granulocytes and regulates T-cell and natural killer-cell responses, induces the production of interferon-gamma (IFN-gamma), favors the differentiation of T-helper 1 (Th1) cells and is an important link between innate resistance and adaptive immunity. Mechanistically, exerts its biological effects through a receptor composed of IL12R1 and IL12R2 subunits. Binding to the receptor results in the rapid tyrosine phosphorylation of a number of cellular substrates including the JAK family kinases TYK2 and JAK2. In turn, recruited STAT4 gets phosphorylated and translocates to the nucleus where it regulates cytokine/growth factor responsive genes. As part of IL-35, plays essential roles in maintaining the immune homeostasis of the liver microenvironment and also functions as an immune-suppressive cytokine. Mediates biological events through unconventional receptors composed of IL12RB2 and gp130/IL6ST heterodimers or homodimers. Signaling requires the transcription factors STAT1 and STAT4, which form a unique heterodimer that binds to distinct DNA sites. The sequence is that of Interleukin-12 subunit alpha (IL12A) from Capra hircus (Goat).